The chain runs to 192 residues: Imidazoleglycerol-phosphate dehydratase (192 aa).

The protein belongs to the imidazoleglycerol-phosphate dehydratase family.

Its subcellular location is the cytoplasm. The enzyme catalyses D-erythro-1-(imidazol-4-yl)glycerol 3-phosphate = 3-(imidazol-4-yl)-2-oxopropyl phosphate + H2O. The protein operates within amino-acid biosynthesis; L-histidine biosynthesis; L-histidine from 5-phospho-alpha-D-ribose 1-diphosphate: step 6/9. This chain is Imidazoleglycerol-phosphate dehydratase, found in Staphylococcus aureus (strain bovine RF122 / ET3-1).